The following is a 440-amino-acid chain: tRNA modification GTPase MnmE (440 aa).

Arg-34, Glu-94, and Arg-134 together coordinate (6S)-5-formyl-5,6,7,8-tetrahydrofolate. Positions 229 to 367 constitute a TrmE-type G domain; the sequence is GVRVVLAGPP…LVALLLDRAA (139 aa). Residue Asn-239 participates in K(+) binding. Residues 239–244, 258–264, 283–286, and 348–350 each bind GTP; these read NAGKST, TPIAGTT, DTAG, and SAR. Ser-243 contributes to the Mg(2+) binding site. Positions 258, 260, and 263 each coordinate K(+). Thr-264 lines the Mg(2+) pocket. Lys-440 contacts (6S)-5-formyl-5,6,7,8-tetrahydrofolate.

This sequence belongs to the TRAFAC class TrmE-Era-EngA-EngB-Septin-like GTPase superfamily. TrmE GTPase family. As to quaternary structure, homodimer. Heterotetramer of two MnmE and two MnmG subunits. K(+) serves as cofactor.

It is found in the cytoplasm. Its function is as follows. Exhibits a very high intrinsic GTPase hydrolysis rate. Involved in the addition of a carboxymethylaminomethyl (cmnm) group at the wobble position (U34) of certain tRNAs, forming tRNA-cmnm(5)s(2)U34. This Rhizorhabdus wittichii (strain DSM 6014 / CCUG 31198 / JCM 15750 / NBRC 105917 / EY 4224 / RW1) (Sphingomonas wittichii) protein is tRNA modification GTPase MnmE.